The following is an 836-amino-acid chain: Protein translocase subunit SecA (836 aa).

Residues Gln85, 103–107 (GEGKT), and Asp492 each bind ATP. Zn(2+) is bound by residues Cys820, Cys822, Cys831, and Cys832.

It belongs to the SecA family. As to quaternary structure, monomer and homodimer. Part of the essential Sec protein translocation apparatus which comprises SecA, SecYEG and auxiliary proteins SecDF. Other proteins may also be involved. Zn(2+) is required as a cofactor.

It is found in the cell membrane. It localises to the cytoplasm. The catalysed reaction is ATP + H2O + cellular proteinSide 1 = ADP + phosphate + cellular proteinSide 2.. In terms of biological role, part of the Sec protein translocase complex. Interacts with the SecYEG preprotein conducting channel. Has a central role in coupling the hydrolysis of ATP to the transfer of proteins into and across the cell membrane, serving as an ATP-driven molecular motor driving the stepwise translocation of polypeptide chains across the membrane. The protein is Protein translocase subunit SecA of Clostridium botulinum (strain Eklund 17B / Type B).